A 208-amino-acid chain; its full sequence is Outer-membrane lipoprotein carrier protein (208 aa).

The first 24 residues, 1 to 24 (MRMNIVQKILSATCFALLPLLAHA), serve as a signal peptide directing secretion.

The protein belongs to the LolA family. As to quaternary structure, monomer.

It localises to the periplasm. In terms of biological role, participates in the translocation of lipoproteins from the inner membrane to the outer membrane. Only forms a complex with a lipoprotein if the residue after the N-terminal Cys is not an aspartate (The Asp acts as a targeting signal to indicate that the lipoprotein should stay in the inner membrane). In Dechloromonas aromatica (strain RCB), this protein is Outer-membrane lipoprotein carrier protein.